We begin with the raw amino-acid sequence, 262 residues long: tRNA pseudouridine synthase A (262 aa).

D51 functions as the Nucleophile in the catalytic mechanism. Y109 contacts substrate.

This sequence belongs to the tRNA pseudouridine synthase TruA family. As to quaternary structure, homodimer.

It catalyses the reaction uridine(38/39/40) in tRNA = pseudouridine(38/39/40) in tRNA. Functionally, formation of pseudouridine at positions 38, 39 and 40 in the anticodon stem and loop of transfer RNAs. In Legionella pneumophila (strain Paris), this protein is tRNA pseudouridine synthase A.